The primary structure comprises 651 residues: Acetyl-coenzyme A synthetase (651 aa).

CoA contacts are provided by residues 189–192 (RGGK), threonine 311, and asparagine 335. ATP-binding positions include 387–389 (GEP), 411–416 (DTWWQT), aspartate 500, and arginine 515. Residue serine 523 participates in CoA binding. Arginine 526 contributes to the ATP binding site. The Mg(2+) site is built by valine 537, histidine 539, and valine 542. Residue arginine 586 participates in CoA binding. Position 611 is an N6-acetyllysine (lysine 611).

This sequence belongs to the ATP-dependent AMP-binding enzyme family. Requires Mg(2+) as cofactor. In terms of processing, acetylated. Deacetylation by the SIR2-homolog deacetylase activates the enzyme.

The catalysed reaction is acetate + ATP + CoA = acetyl-CoA + AMP + diphosphate. Catalyzes the conversion of acetate into acetyl-CoA (AcCoA), an essential intermediate at the junction of anabolic and catabolic pathways. AcsA undergoes a two-step reaction. In the first half reaction, AcsA combines acetate with ATP to form acetyl-adenylate (AcAMP) intermediate. In the second half reaction, it can then transfer the acetyl group from AcAMP to the sulfhydryl group of CoA, forming the product AcCoA. The protein is Acetyl-coenzyme A synthetase of Brucella melitensis biotype 1 (strain ATCC 23456 / CCUG 17765 / NCTC 10094 / 16M).